The chain runs to 345 residues: Selenide, water dikinase (345 aa).

Cysteine 16 is an active-site residue. Residues lysine 19 and 46–48 (TSD) contribute to the ATP site. Mg(2+) is bound at residue aspartate 49. Residues aspartate 66, aspartate 89, and 136 to 138 (GHT) contribute to the ATP site. Aspartate 89 is a Mg(2+) binding site. Aspartate 224 is a binding site for Mg(2+).

Belongs to the selenophosphate synthase 1 family. Class I subfamily. In terms of assembly, homodimer. Mg(2+) is required as a cofactor.

It carries out the reaction hydrogenselenide + ATP + H2O = selenophosphate + AMP + phosphate + 2 H(+). Synthesizes selenophosphate from selenide and ATP. This chain is Selenide, water dikinase, found in Clostridium botulinum (strain Alaska E43 / Type E3).